A 488-amino-acid chain; its full sequence is Histamine H1 receptor (488 aa).

The Extracellular portion of the chain corresponds to 1-29 (MSLPNTSSASEDKMCEGNRTAMASPQLLP). Residues Asn-5 and Asn-18 are each glycosylated (N-linked (GlcNAc...) asparagine). The helical transmembrane segment at 30 to 50 (LVVVLSSISLVTVGLNLLVLY) threads the bilayer. Residues 51–64 (AVRSERKLHTVGNL) are Cytoplasmic-facing. The helical transmembrane segment at 65-89 (YIVSLSVADLIVGAVVMPMNILYLI) threads the bilayer. Residues 90 to 97 (MTKWSLGR) lie on the Extracellular side of the membrane. A helical membrane pass occupies residues 98 to 123 (PLCLFWLSMDYVASTASIFSVFILCI). A disulfide bridge links Cys-100 with Cys-180. The histamine site is built by Asp-107 and Thr-112. The interval 107–112 (DYVAST) is important for agonist binding. At 124 to 144 (DRYRSVQQPLRYLRYRTKTRA) the chain is on the cytoplasmic side. 2 positions are modified to phosphothreonine: Thr-140 and Thr-142. The chain crosses the membrane as a helical span at residues 145 to 164 (SATILGAWFLSFLWVIPILG). Topologically, residues 165 to 188 (WHHFTPLAPELREDKCETDFYNVT) are extracellular. A helical transmembrane segment spans residues 189–211 (WFKIMTAIINFYLPTLLMLWFYV). A histamine-binding site is contributed by Asn-198. Residues 212-417 (KIYKAVRRHC…LNRERKAAKQ (206 aa)) are Cytoplasmic-facing. Position 230 is a phosphoserine (Ser-230). The segment at 245-337 (KEGAKKPGKE…SQPKMDEQSL (93 aa)) is disordered. A compositionally biased stretch (polar residues) spans 322–337 (ANDQTLSQPKMDEQSL). 6 positions are modified to phosphoserine: Ser-344, Ser-347, Ser-381, Ser-383, Ser-397, and Ser-399. The helical transmembrane segment at 418 to 441 (LGCIMAAFILCWIPYFIFFMVIAF) threads the bilayer. Positions 425–429 (FILCW) are important for agonist binding. Tyr-432 lines the histamine pocket. The cysteines at positions 442 and 445 are disulfide-linked. Topologically, residues 442–447 (CNSCCS) are extracellular. Residues 448 to 470 (EPVHMFTIWLGYINSTLNPLIYP) form a helical membrane-spanning segment. At 471–488 (LCNENFKKTFKKILHIRS) the chain is on the cytoplasmic side.

It belongs to the G-protein coupled receptor 1 family. Phosphorylation at sites in the second and third cytoplasmic loops independently contribute to agonist-induced receptor down-regulation.

It localises to the cell membrane. Its function is as follows. G-protein-coupled receptor for histamine, a biogenic amine that functions as an immune modulator and a neurotransmitter. Through the H1 receptor, histamine mediates the contraction of smooth muscles and increases capillary permeability due to contraction of terminal venules. Also mediates neurotransmission in the central nervous system and thereby regulates circadian rhythms, emotional and locomotor activities as well as cognitive functions. This Mus musculus (Mouse) protein is Histamine H1 receptor.